Reading from the N-terminus, the 148-residue chain is Lysozyme C (148 aa).

Positions 1-18 (MKVLILLGLVLLSVMVQG) are cleaved as a signal peptide. Residues 19 to 148 (KVFERCELAR…VSQYIQGCGV (130 aa)) form the C-type lysozyme domain. 4 cysteine pairs are disulfide-bonded: Cys-24–Cys-146, Cys-48–Cys-134, Cys-83–Cys-99, and Cys-95–Cys-113. Residues Glu-53 and Asp-71 contribute to the active site.

Belongs to the glycosyl hydrolase 22 family. Monomer.

The protein resides in the secreted. It catalyses the reaction Hydrolysis of (1-&gt;4)-beta-linkages between N-acetylmuramic acid and N-acetyl-D-glucosamine residues in a peptidoglycan and between N-acetyl-D-glucosamine residues in chitodextrins.. Functionally, lysozymes have primarily a bacteriolytic function; those in tissues and body fluids are associated with the monocyte-macrophage system and enhance the activity of immunoagents. This is Lysozyme C (LYZ) from Saguinus oedipus (Cotton-top tamarin).